A 468-amino-acid chain; its full sequence is Na(+)/H(+) antiporter NhaA (468 aa).

The next 12 helical transmembrane spans lie at 28–48, 79–99, 115–135, 143–163, 173–193, 196–216, 219–239, 240–260, 317–337, 356–376, 392–412, and 426–446; these read FLHV…IALV, LHFW…GMEI, ALPL…YLAF, AGWA…LALL, IFLL…IAFF, GGLD…VLGL, IGIG…TGLL, MTGA…PVVP, ALHP…NAGV, VAGA…WLLV, IVLI…IAML, and LGVL…GAIY.

Belongs to the NhaA Na(+)/H(+) (TC 2.A.33) antiporter family.

The protein resides in the cell inner membrane. The catalysed reaction is Na(+)(in) + 2 H(+)(out) = Na(+)(out) + 2 H(+)(in). Na(+)/H(+) antiporter that extrudes sodium in exchange for external protons. This is Na(+)/H(+) antiporter NhaA from Bordetella petrii (strain ATCC BAA-461 / DSM 12804 / CCUG 43448).